Here is a 93-residue protein sequence, read N- to C-terminus: Cobalt transport protein CbiN (93 aa).

2 helical membrane passes run 5 to 25 (LILLAMVIALVILPFFIDHGG) and 62 to 82 (SLLFTLQGSLGAAVIFYILGY).

This sequence belongs to the CbiN family. In terms of assembly, forms an energy-coupling factor (ECF) transporter complex composed of an ATP-binding protein (A component, CbiO), a transmembrane protein (T component, CbiQ) and 2 possible substrate-capture proteins (S components, CbiM and CbiN) of unknown stoichimetry.

The protein resides in the cell inner membrane. It functions in the pathway cofactor biosynthesis; adenosylcobalamin biosynthesis. Its function is as follows. Part of the energy-coupling factor (ECF) transporter complex CbiMNOQ involved in cobalt import. This Citrobacter koseri (strain ATCC BAA-895 / CDC 4225-83 / SGSC4696) protein is Cobalt transport protein CbiN.